Here is a 450-residue protein sequence, read N- to C-terminus: FAD-dependent monooxygenase okaB (450 aa).

The chain crosses the membrane as a helical span at residues 14–34 (IVIIIVGLGIAGLSAAIECHG). Residues E43 and R116 each coordinate FAD. R194 is a catalytic residue. FAD-binding residues include D318 and G331.

The protein belongs to the paxM FAD-dependent monooxygenase family.

It is found in the membrane. It catalyses the reaction cyclo(N(8)-(alpha,alpha-dimethylallyl)-L-Trp-6a-(alpha,alpha-dimethylallyl)-L-Trp) + AH2 + O2 = okaramine C + A + H2O. Its pathway is alkaloid biosynthesis. Its function is as follows. FAD-dependent monooxygenase; part of the gene cluster that mediates the biosynthesis of okaramine B, a prenylated indole alkaloid that possesses an unusual octacyclic ring system, including a four-membered azetidine ring and an eight-membered azocine ring, and that exhibits insecticidal activity against silkworm larvae. Within the pathway, okaC performs indole 2,3-epoxidation, facilitating the formation of the hexahydropyrrolo[2,3-b]indole (HPI) moiety of okaramine C. okaC then performs asymmetric reverse prenylation of cyclo(L-Trp-L-Trp) at N-1 and C-2' of the indole ring to produce the cyclic prenylated tryptophan dimer cyclo(N8-(alpha,alpha-dimethylallyl)-L-Trp-6a-(alpha,alpha-dime-thylallyl)-L-Trp). The biosynthesis begins with the NRPS okaA that condenses two tryptophan molecules into cyclo(L-Trp-L-Trp). Prenylation by the prenyltransferase okaC then leads to the formation of cyclo(N8-(alpha,alpha-dimethylallyl)-L-Trp-6a-(alpha,alpha-dime-thylallyl)-L-Trp). This is followed by indole 2,3-epoxidation by the FAD-dependent monooxygenase okaB to facilitate the formation of the hexahydropyrrolo[2,3-b]indole (HPI) moiety of okaramine C. The cytochrome P450 monooxygenase okaD then likely catalyzes formation of the eight-membered ring of okaramine A. The dioxygenase okaE further forms the unusual 2-dimethyl-3-methyl-azetidine ring to yield 12-deshydroxyl okaramine E, as well as the hydroxylation of 12-deshydroxyl okaramine E to produce okaramine E. The cytochrome P450 monoxygenase okaG converts 12-deshydroxyl okaramine E into 3-desmethyl okaramine B which is further methylated by the methyltransferase okaF into okaramine B. In a shunt pathway, okaG and okaF together are also able to convert okaramine E into okaramine D. Okaramine H is produced by nonenzymatic conversion from okaramine A. In Penicillium ochrochloron, this protein is FAD-dependent monooxygenase okaB.